A 425-amino-acid polypeptide reads, in one-letter code: Ribosome biogenesis protein WDR12 homolog (425 aa).

The ubiquitin-like (UBL) domain stretch occupies residues 7-93; sequence IQAKFFTKDE…ETIVHLEYLE (87 aa). WD repeat units lie at residues 105 to 142, 145 to 187, 194 to 233, 265 to 303, 305 to 344, 350 to 390, and 394 to 425; these read IHDD…RRLT, GHLG…NAVE, GHAR…TDTD, GHHE…MKSQ, AGSK…GTIV, SHAG…APLY, and GHED…FEHK. The segment at 227 to 253 is disordered; sequence PDSTDTDHGQDGSEEGSRKKQKTVDGK. A compositionally biased stretch (basic and acidic residues) spans 231 to 253; it reads DTDHGQDGSEEGSRKKQKTVDGK.

Belongs to the WD repeat WDR12/YTM1 family.

The protein localises to the nucleus. It localises to the nucleolus. It is found in the nucleoplasm. Its function is as follows. Required for maturation of ribosomal RNAs and formation of the large ribosomal subunit. This is Ribosome biogenesis protein WDR12 homolog from Ixodes scapularis (Black-legged tick).